We begin with the raw amino-acid sequence, 160 residues long: Small RNA binding protein 1 (160 aa).

Positions 8–86 (FRCFVGGLAW…RNITVNEAQQ (79 aa)) constitute an RRM domain. Residues 82–160 (NEAQQRGGGG…GGGSEGGWRN (79 aa)) are disordered. Residues 87 to 160 (RGGGGGGGYN…GGGSEGGWRN (74 aa)) show a composition bias toward gly residues. Residues 88-157 (GGGGGGGYNR…GSGGGGSEGG (70 aa)) are glycine-rich (GR) required for cell-to-cell movement.

Belongs to the GR-RBP family. As to quaternary structure, binds to small phloem-mobile single-stranded RNAs (ss-sRNA, e.g. small interfering RNA (siRNA) and microRNA (miRNA)) in the phloeme exudate, including viral-derived sRNA (vsiRNA). In terms of tissue distribution, accumulates in phloem exudates.

The protein localises to the secreted. Functionally, possibly has a role in RNA transcription or processing during stress. Binds sequence non-specifically to RNAs and DNAs. Mediates cell-to-cell trafficking of RNA interference (RNAi) signals (small RNAs (sRNA), e.g. small interfering RNA (siRNA) and microRNA (miRNA)) which regulate growth and development, as well as responses to environmental inputs, including pathogen attack; can compromise zucchini yellow mosaic virus (ZYMV) and tobacco rattle virus (TRV) infections at the early stage. This is Small RNA binding protein 1 from Cucumis sativus (Cucumber).